The chain runs to 662 residues: Polyunsaturated fatty acid (12S)/(13S)-lipoxygenase, epidermal-type (662 aa).

The 113-residue stretch at 2 to 114 (GKYKILVVTG…TIYLPEGTAL (113 aa)) folds into the PLAT domain. The region spanning 114 to 662 (LKVNDDTKNL…PSMVENSVTI (549 aa)) is the Lipoxygenase domain. Positions 360, 365, 540, 544, and 662 each coordinate Fe cation.

This sequence belongs to the lipoxygenase family. Fe cation is required as a cofactor.

The protein resides in the cytoplasm. It carries out the reaction (5Z,8Z,11Z,14Z)-eicosatetraenoate + O2 = (12S)-hydroperoxy-(5Z,8Z,10E,14Z)-eicosatetraenoate. It catalyses the reaction 1-O-methyl-(9Z,12Z)-octadecadienoate + O2 = 1-O-methyl-(13S)-hydroperoxy-(9Z,11E)-octadecadienoate. The enzyme catalyses (8Z,11Z,14Z)-eicosatrienoate + O2 = (12S)-hydroperoxy-(8Z,10E,14Z)-eicosatrienoate. The catalysed reaction is (5Z,8Z,11Z)-eicosatrienoate + O2 = (12S)-hydroperoxy-(5Z,8Z,10E)-eicosatrienoate. It carries out the reaction 1-O-methyl-(5Z,8Z,11Z,14Z)-eicosatetraenoate + O2 = 1-O-methyl-(12S)-hydroperoxy-(5Z,8Z,10E,14Z)-eicosatetraenoate. It catalyses the reaction (9Z,12Z)-octadecadienoate + O2 = (13S)-hydroperoxy-(9Z,11E)-octadecadienoate. The enzyme catalyses (4Z,7Z,10Z,13Z,16Z,19Z)-docosahexaenoate + O2 = (14S)-hydroperoxy-(4Z,7Z,10Z,12E,16Z,19Z)-docosahexaenoate. It functions in the pathway lipid metabolism; hydroperoxy eicosatetraenoic acid biosynthesis. Its activity is regulated as follows. Arachidonate 12-lipoxygenase activity is decreased when the pH decreases from 7.4 to 6.0. Catalyzes the regio and stereo-specific incorporation of a single molecule of dioxygen into free and esterified polyunsaturated fatty acids generating lipid hydroperoxides that can be further reduced to the corresponding hydroxy species. Shows increasing catalytic activity within the series arachidonic acid &lt; 5,8,11-eicosatrienoic acid &lt; linoleic acid &lt; 8,11,14-eicosatrienoic acid. The sequence is that of Polyunsaturated fatty acid (12S)/(13S)-lipoxygenase, epidermal-type from Rattus norvegicus (Rat).